Consider the following 72-residue polypeptide: Conotoxin Vc6.16 (72 aa).

A signal peptide spans Met-1–Ala-19. The propeptide occupies Leu-20–Gln-44. Cystine bridges form between Cys-48/Cys-62, Cys-55/Cys-66, and Cys-61/Cys-71.

The protein belongs to the conotoxin O2 superfamily. Expressed by the venom duct.

It localises to the secreted. Inhibits voltage-gated ion channels. This Conus victoriae (Queen Victoria cone) protein is Conotoxin Vc6.16.